Reading from the N-terminus, the 137-residue chain is ATP synthase epsilon chain (137 aa).

Belongs to the ATPase epsilon chain family. As to quaternary structure, F-type ATPases have 2 components, CF(1) - the catalytic core - and CF(0) - the membrane proton channel. CF(1) has five subunits: alpha(3), beta(3), gamma(1), delta(1), epsilon(1). CF(0) has three main subunits: a, b and c.

The protein resides in the cellular thylakoid membrane. Produces ATP from ADP in the presence of a proton gradient across the membrane. This chain is ATP synthase epsilon chain, found in Trichormus variabilis (strain ATCC 29413 / PCC 7937) (Anabaena variabilis).